The following is a 310-amino-acid chain: Putative S-adenosyl-L-methionine-dependent methyltransferase MUL_4763 (310 aa).

S-adenosyl-L-methionine is bound by residues aspartate 137 and 166 to 167; that span reads DL.

This sequence belongs to the UPF0677 family.

In terms of biological role, exhibits S-adenosyl-L-methionine-dependent methyltransferase activity. This chain is Putative S-adenosyl-L-methionine-dependent methyltransferase MUL_4763, found in Mycobacterium ulcerans (strain Agy99).